Here is a 205-residue protein sequence, read N- to C-terminus: Ras-related protein rab-6.1 (205 aa).

Residues 18–25 (GEQSVGKT), T43, 66–70 (DTAGQ), and 124–127 (NKTD) each bind GTP. S-geranylgeranyl cysteine attachment occurs at residues C203 and C205. Residue C205 is modified to Cysteine methyl ester.

The protein belongs to the small GTPase superfamily. Rab family. In terms of assembly, interacts with GARP complex component vps-52. Highly expressed in body wall muscle, intestine, somatic gonad, distal tip cells, vulva, and neurons including AVB, AVD, RIG, and PVC (at protein level). Not expressed in AVA and RMDV neurons.

It localises to the cell membrane. Its subcellular location is the cell projection. The protein localises to the dendrite. The protein resides in the perikaryon. It is found in the golgi apparatus. It localises to the cytoplasmic vesicle. Its subcellular location is the secretory vesicle. In terms of biological role, the small GTPases Rab are key regulators of intracellular membrane trafficking, from the formation of transport vesicles to their fusion with membranes. Rabs cycle between an inactive GDP-bound form and an active GTP-bound form that is able to recruit to membranes different set of downstream effectors directly responsible for vesicle formation, movement, tethering and fusion. In its active GTP-bound form, acts redundantly with rab-6.2 (in its active GTP-bound form) to positively regulate the retrograde trafficking of cargo molecules from endosomes to Golgi structures. Required for the retrograde trafficking of glr-1, a subunit of AMPA-type glutamate receptors (AMPRs), out of early endosomes and into the Golgi compartment in neurons. Together with rab-6.2, promotes the retrograde trafficking of mig-14 from endosomes to Golgi structures in the intestine. In oocytes, in its active GTP-bound form, involved in the membrane fusion and exocytosis of secretory vesicles (cortical granules) to play a role in the remodeling of the embryo surface following fertilization. Recruits sep-1 to cortical granules (derived from the Golgi complex) for exocytosis during the oocyte-to-embryo transition. Required for seam cell division and alae formation. Promotes spontaneous reversals in locomotion. In Caenorhabditis elegans, this protein is Ras-related protein rab-6.1.